The following is a 234-amino-acid chain: Cell adhesion molecule CEACAM15 (234 aa).

Residues 1–32 (MGAETMESPSLFLCKGLLLTASLLICWNWSTA) form the signal peptide. 4 N-linked (GlcNAc...) asparagine glycosylation sites follow: asparagine 28, asparagine 75, asparagine 151, and asparagine 184. In terms of domain architecture, Ig-like C2-type spans 146–226 (PYLQLNHTRL…NSFSSKKSYP (81 aa)). A disulfide bridge links cysteine 165 with cysteine 213.

The protein belongs to the immunoglobulin superfamily. CEA family. Detected in placenta.

The sequence is that of Cell adhesion molecule CEACAM15 from Mus musculus (Mouse).